Consider the following 244-residue polypeptide: MTLDLDAHKKDDKLLITTIQQEYKILAEYKMIESEKLSGIYVIPSYANSLQWFGVFFGRQGLYAESVFRFTILLPDRFPDDKSLPSIIFQQDVIHPHVCPYTHSLDVSHAFPEWRCGEDHLWQLLKYLQVIFSDPLDSIRGIEVDKLKNSEAAELLMNNKEEYVARVQENIKESKEHIFDTPPTEDPHYIVFEKFQQDVHGPVLERIKAGRSKLTEPSAQQANGGHATGLSWVKEGEFKPLSIE.

A UBC core domain is found at 20-176 (QQEYKILAEY…VQENIKESKE (157 aa)).

This sequence belongs to the ubiquitin-conjugating enzyme family. FTS subfamily. Interacts (via N-terminus) with cav/HOAP (via N-terminus); the interaction is direct. Probably interacts (via N-terminus and UBC domain) with ver and moi.

It localises to the nucleus. The protein localises to the nucleolus. It is found in the chromosome. Required for efficient DNA replication, probably through involvement in telomere replication. May have a role in telomere capping of heterochromatic chromosome ends. This chain is Protein pendolino, found in Drosophila melanogaster (Fruit fly).